Here is a 294-residue protein sequence, read N- to C-terminus: Aquaporin-B (294 aa).

Residues 1–31 are disordered; sequence MSLKRSDDYQDLEEGIAMEDGGNIKDEEEKP. Topologically, residues 1 to 42 are cytoplasmic; the sequence is MSLKRSDDYQDLEEGIAMEDGGNIKDEEEKPLDPIEEQNKKR. Over residues 22-31 the composition is skewed to basic and acidic residues; the sequence is GNIKDEEEKP. Residues 43–63 form a helical membrane-spanning segment; it reads WVLIRAVLGELLCTFLFVYVL. Over 64-79 the chain is Extracellular; it reads CATSANFIRLGSPPNP. The O-linked (GalNAc...) serine glycan is linked to Ser-75. Residues 80-100 traverse the membrane as a helical segment; it reads VVGGLSTGFAAVALIYSFADV. Residues 101–123 lie on the Cytoplasmic side of the membrane; it reads SGAHFNPAVTFATCVTRKTSITK. An NPA 1 motif is present at residues 106–108; that stretch reads NPA. Residues 124–144 traverse the membrane as a helical segment; it reads GLMYVGAQLVGSVLASLILLA. The Extracellular portion of the chain corresponds to 145–172; that stretch reads TFPGNFPGDKNAASAVAIAPSTDANIGN. The chain crosses the membrane as a helical span at residues 173–193; sequence AFLTELVLTFILVYVIFAVAF. At 194-224 the chain is on the cytoplasmic side; that stretch reads DTVDNSVKTKVVGKSSSNNLTIYTTSGQTKA. The segment at 208 to 219 is required for water permeability; that stretch reads SSSNNLTIYTTS. Residues 225 to 245 form a helical membrane-spanning segment; that stretch reads GFAPIAIGFTLGFLCFLGGSV. Topologically, residues 246–268 are extracellular; the sequence is SGGAFNPARVFGTALVGNNWTRH. An NPA 2 motif is present at residues 251-253; that stretch reads NPA. Residues 269–289 traverse the membrane as a helical segment; it reads WMYWIADFLGAGLAGFAQKFF. Topologically, residues 290–294 are cytoplasmic; sequence SSTHK.

The protein belongs to the MIP/aquaporin (TC 1.A.8) family. Post-translationally, glycosylated and non-glycosylated forms exist throughout all developmental stages.

It localises to the cell membrane. The protein localises to the cytoplasmic vesicle. In terms of biological role, putatively gated water-specific channel, requiring a cysteine residue within the channel. Impermeable to water, glycerol and urea when expressed in Xenopus oocytes. Not regulated by pH; channels remain impermeable to water at pH 7.4 and 5.2. In Dictyostelium discoideum (Social amoeba), this protein is Aquaporin-B.